The primary structure comprises 438 residues: GTPase Der (438 aa).

2 EngA-type G domains span residues 4–168 and 177–352; these read PVVA…DDNS and TKVC…NNYS. Residues 10 to 17, 57 to 61, 120 to 123, 183 to 190, 230 to 234, and 295 to 298 each bind GTP; these read GRANVGKS, DTGGL, NKID, GKPNVGKS, DTAGL, and NKWD. Residues 353 to 437 form the KH-like domain; the sequence is MRISTGVLND…PLQFEFKTRG (85 aa).

This sequence belongs to the TRAFAC class TrmE-Era-EngA-EngB-Septin-like GTPase superfamily. EngA (Der) GTPase family. In terms of assembly, associates with the 50S ribosomal subunit.

Functionally, GTPase that plays an essential role in the late steps of ribosome biogenesis. The chain is GTPase Der from Finegoldia magna (strain ATCC 29328 / DSM 20472 / WAL 2508) (Peptostreptococcus magnus).